A 237-amino-acid chain; its full sequence is Nitrogen fixation regulation protein FixK (237 aa).

The 74-residue stretch at 156-229 folds into the HTH crp-type domain; sequence RSADEKVAAF…HGGISLLDPA (74 aa). Positions 189-208 form a DNA-binding region, H-T-H motif; it reads RQDIADYLGLTIETVSRTFT.

B.japonicum has two FixLJ-dependent FixK homologs that are activators of the transcription of a group of genes involved in anaerobic processes such as denitrification and possibly nitrogen fixation. FixK may bind DNA at the FNR consensus binding site. This is Nitrogen fixation regulation protein FixK (fixK) from Bradyrhizobium diazoefficiens (strain JCM 10833 / BCRC 13528 / IAM 13628 / NBRC 14792 / USDA 110).